We begin with the raw amino-acid sequence, 113 residues long: Ribonuclease P protein component (113 aa).

Belongs to the RnpA family. As to quaternary structure, consists of a catalytic RNA component (M1 or rnpB) and a protein subunit.

It carries out the reaction Endonucleolytic cleavage of RNA, removing 5'-extranucleotides from tRNA precursor.. Functionally, RNaseP catalyzes the removal of the 5'-leader sequence from pre-tRNA to produce the mature 5'-terminus. It can also cleave other RNA substrates such as 4.5S RNA. The protein component plays an auxiliary but essential role in vivo by binding to the 5'-leader sequence and broadening the substrate specificity of the ribozyme. This Vesicomyosocius okutanii subsp. Calyptogena okutanii (strain HA) protein is Ribonuclease P protein component.